The sequence spans 324 residues: MEGLEENGGVVQVGELLPCKICGRTFFPVALKKHGPICKKTATKKRKTFDSSRQRAEGTDIPTVKPLKPRPEPPKKPSNWRRKHEEFIATIRAAKGLDQALKEGGKLPPPPPPSYDPDYIQCPYCQRRFNENAADRHINFCKEQAARISNKGKFSTDTKGKPTSRTQYKPPALKKSNSPGTASSGSSRLPQPSGAGKTVVGVPSGKVSSSSSSLGNKLQTLSPSHKGIAAPHAVANVKPRNSTPPSLARNPAPGVLTNKRKTYTESYIYRPDGDSASSLNGGNIKGIEGNSPGNLSKFCHECGTKYPVEWAKFCCECGIRRMIL.

A C2HC/C3H-type 1 zinc finger spans residues 15-44; that stretch reads ELLPCKICGRTFFPVALKKHGPICKKTATK. Residues Cys19, Cys22, His34, and Cys38 each contribute to the Zn(2+) site. The segment at 43-83 is disordered; sequence TKKRKTFDSSRQRAEGTDIPTVKPLKPRPEPPKKPSNWRRK. Basic and acidic residues predominate over residues 48-58; the sequence is TFDSSRQRAEG. Residues 118–147 form a C2HC/C3H-type 2 zinc finger; sequence DYIQCPYCQRRFNENAADRHINFCKEQAAR. Residues Cys122, Cys125, His137, and Cys141 each coordinate Zn(2+). Disordered regions lie at residues 150 to 224 and 236 to 259; these read NKGK…LSPS and NVKPRNSTPPSLARNPAPGVLTNK. Composition is skewed to low complexity over residues 176–187 and 196–215; these read SNSPGTASSGSS and GKTVVGVPSGKVSSSSSSLG. Position 222 is a phosphoserine (Ser222). A Phosphothreonine modification is found at Thr243. Ser291 is subject to Phosphoserine.

It belongs to the ZC2HC1 family. It depends on Zn(2+) as a cofactor.

In Pongo abelii (Sumatran orangutan), this protein is Zinc finger C2HC domain-containing protein 1A (ZC2HC1A).